We begin with the raw amino-acid sequence, 204 residues long: Large ribosomal subunit protein uL13 (204 aa).

Belongs to the universal ribosomal protein uL13 family.

The polypeptide is Large ribosomal subunit protein uL13 (RpL13A) (Spodoptera frugiperda (Fall armyworm)).